Reading from the N-terminus, the 412-residue chain is Heat stress transcription factor A-3 (412 aa).

A DNA-binding region spans residues 53–147; the sequence is IPPFLSKTFD…LLKNIHRRRS (95 aa). The interval 144–170 is disordered; it reads RRRSPQSNQTCCSSTSQSQGSPTEVGG. Positions 148 to 166 are enriched in low complexity; it reads PQSNQTCCSSTSQSQGSPT. Residues 159–225 form a hydrophobic repeat HR-A/B region; that stretch reads SQSQGSPTEV…QLLSFLAKLF (67 aa). Residues 166–224 adopt a coiled-coil conformation; it reads TEVGGEIEKLRKERRALMEEMVELQQQSRGTARHVDTVNQRLKAAEQRQKQLLSFLAKL. The short motif at 238–254 is the Bipartite nuclear localization signal element; sequence KGKEKGGALGLEKARKK. Positions 277-286 match the AHA1 motif; sequence DDWERLLMYD. The short motif at 381–390 is the AHA2 element; sequence DVCWEQFAAG.

Belongs to the HSF family. Class A subfamily. As to quaternary structure, homotrimer. Exhibits temperature-dependent phosphorylation.

It localises to the nucleus. Transcriptional activator that specifically binds DNA sequence 5'-AGAAnnTTCT-3' known as heat shock promoter elements (HSE). Involved in heat stress response. Activated by DREB2A under heat stress. The polypeptide is Heat stress transcription factor A-3 (HSFA3) (Arabidopsis thaliana (Mouse-ear cress)).